Here is a 400-residue protein sequence, read N- to C-terminus: S-adenosylmethionine decarboxylase proenzyme (400 aa).

Catalysis depends on residues Glu18 and Glu21. Ser78 functions as the Schiff-base intermediate with substrate; via pyruvic acid in the catalytic mechanism. Ser78 carries the pyruvic acid (Ser); by autocatalysis modification. Cys92 functions as the Proton donor; for catalytic activity in the catalytic mechanism. Residues Ser243 and His256 each act as proton acceptor; for processing activity in the active site.

Belongs to the eukaryotic AdoMetDC family. It depends on pyruvate as a cofactor. In terms of processing, is synthesized initially as an inactive proenzyme. Formation of the active enzyme involves a self-maturation process in which the active site pyruvoyl group is generated from an internal serine residue via an autocatalytic post-translational modification. Two non-identical subunits are generated from the proenzyme in this reaction, and the pyruvate is formed at the N-terminus of the alpha chain, which is derived from the carboxyl end of the proenzyme. The post-translation cleavage follows an unusual pathway, termed non-hydrolytic serinolysis, in which the side chain hydroxyl group of the serine supplies its oxygen atom to form the C-terminus of the beta chain, while the remainder of the serine residue undergoes an oxidative deamination to produce ammonia and the pyruvoyl group blocking the N-terminus of the alpha chain.

It catalyses the reaction S-adenosyl-L-methionine + H(+) = S-adenosyl 3-(methylsulfanyl)propylamine + CO2. Its pathway is amine and polyamine biosynthesis; S-adenosylmethioninamine biosynthesis; S-adenosylmethioninamine from S-adenosyl-L-methionine: step 1/1. This chain is S-adenosylmethionine decarboxylase proenzyme (SAMDC), found in Zea mays (Maize).